The sequence spans 177 residues: Dual-action ribosomal maturation protein DarP (177 aa).

Belongs to the DarP family.

The protein localises to the cytoplasm. Its function is as follows. Member of a network of 50S ribosomal subunit biogenesis factors which assembles along the 30S-50S interface, preventing incorrect 23S rRNA structures from forming. Promotes peptidyl transferase center (PTC) maturation. The protein is Dual-action ribosomal maturation protein DarP of Glaesserella parasuis serovar 5 (strain SH0165) (Haemophilus parasuis).